The chain runs to 341 residues: Binder of USO1 and GRH1 protein 1 (341 aa).

Residues 1 to 181 are disordered; the sequence is MSEQESDEVK…AADDLFANDG (181 aa). N-acetylserine is present on S2. The stretch at 2–41 forms a coiled coil; that stretch reads SEQESDEVKRMKQLEEARKRVEELKKKKNKKNKGKKNKNS. Basic and acidic residues predominate over residues 7–26; that stretch reads DEVKRMKQLEEARKRVEELK. Residues 27-39 are compositionally biased toward basic residues; the sequence is KKKNKKNKGKKNK. A compositionally biased stretch (polar residues) spans 69–78; that stretch reads KANSTKSENN. Residues 79 to 91 show a composition bias toward acidic residues; that stretch reads DQNDVDEESEEKE. S87 is subject to Phosphoserine. Residues 118 to 132 show a composition bias toward basic and acidic residues; sequence GKDDAENTKKEEVQE. Over residues 158–171 the composition is skewed to polar residues; that stretch reads VQTQEGNEPSNTSE. A Phosphoserine modification is found at S170. Positions 188–272 form a coiled coil; it reads LTTIKKQKEE…LKLAEAKAAR (85 aa). T292 bears the Phosphothreonine mark.

As to quaternary structure, interacts with GRH1 (via C-terminus), probably forming a heterooligomer consisting of a GRH1 dimer and a BUG1 dimer.

It localises to the cytoplasm. It is found in the golgi apparatus. The protein resides in the cis-Golgi network membrane. In terms of biological role, involved in ER to Golgi vesicle-mediated transport by either facilitating USO1-dependent and -independent tethering or increasing target accuracy of fusion events of COPII-coated vesicles. The chain is Binder of USO1 and GRH1 protein 1 from Saccharomyces cerevisiae (strain ATCC 204508 / S288c) (Baker's yeast).